The chain runs to 105 residues: Probable guanidinium efflux system subunit GdnD (105 aa).

4 consecutive transmembrane segments (helical) span residues methionine 1–methionine 21, tryptophan 32–glutamate 52, alanine 59–tyrosine 79, and alanine 85–serine 105.

It belongs to the drug/metabolite transporter (DMT) superfamily. Small multidrug resistance (SMR) (TC 2.A.7.1) family. YkkC/YkkD subfamily. As to quaternary structure, the efflux pump is composed of GdnC and GdnD.

The protein localises to the cell membrane. Probably involved in guanidinium transport. In vitro, confers resistance to a broad range of toxic compounds such as cationic dyes, neutral and anionic antimicrobials. This is Probable guanidinium efflux system subunit GdnD from Bacillus subtilis (strain 168).